Consider the following 65-residue polypeptide: Beta-toxin Tf4a (65 aa).

The region spanning 2–63 (KEGYPADSKG…VWDSATNKCG (62 aa)) is the LCN-type CS-alpha/beta domain. Disulfide bonds link Cys12–Cys62, Cys16–Cys38, Cys24–Cys43, and Cys28–Cys45. Position 62 is a cysteine amide (Cys62).

It belongs to the long (4 C-C) scorpion toxin superfamily. Sodium channel inhibitor family. Alpha subfamily. As to expression, expressed by the venom gland.

It localises to the secreted. Its function is as follows. Alpha toxins bind voltage-independently at site-3 of sodium channels (Nav) and inhibit the inactivation of the activated channels, thereby blocking neuronal transmission. This toxin is toxic to frogs but non-toxic to insect larvae (T.molitor), mammals (rats) and crustaceans (crabs) at the doses assayed. This Tityus fasciolatus (Central Brazilian scorpion) protein is Beta-toxin Tf4a.